The primary structure comprises 229 residues: Germin-like protein 12-2 (229 aa).

An N-terminal signal peptide occupies residues 1-22 (MASSNFFLLTALIALVATQAMA). Cys32 and Cys47 form a disulfide bridge. In terms of domain architecture, Cupin type-1 spans 62 to 217 (ANLDKPMDTT…AFQVDKKAVD (156 aa)). Asn78 carries N-linked (GlcNAc...) asparagine glycosylation. Residues His111, His113, Glu118, and His162 each coordinate Mn(2+).

The protein belongs to the germin family. As to quaternary structure, oligomer (believed to be a pentamer but probably hexamer).

The protein resides in the secreted. It is found in the extracellular space. It localises to the apoplast. In terms of biological role, may play a role in plant defense. Probably has no oxalate oxidase activity even if the active site is conserved. The chain is Germin-like protein 12-2 from Oryza sativa subsp. japonica (Rice).